Reading from the N-terminus, the 367-residue chain is UDP-N-acetylglucosamine--N-acetylmuramyl-(pentapeptide) pyrophosphoryl-undecaprenol N-acetylglucosamine transferase (367 aa).

Residues 18–20 (TGG), N130, R170, S196, I252, 271–276 (ALTVSE), and Q297 contribute to the UDP-N-acetyl-alpha-D-glucosamine site.

The protein belongs to the glycosyltransferase 28 family. MurG subfamily.

The protein resides in the cell inner membrane. It carries out the reaction di-trans,octa-cis-undecaprenyl diphospho-N-acetyl-alpha-D-muramoyl-L-alanyl-D-glutamyl-meso-2,6-diaminopimeloyl-D-alanyl-D-alanine + UDP-N-acetyl-alpha-D-glucosamine = di-trans,octa-cis-undecaprenyl diphospho-[N-acetyl-alpha-D-glucosaminyl-(1-&gt;4)]-N-acetyl-alpha-D-muramoyl-L-alanyl-D-glutamyl-meso-2,6-diaminopimeloyl-D-alanyl-D-alanine + UDP + H(+). It participates in cell wall biogenesis; peptidoglycan biosynthesis. In terms of biological role, cell wall formation. Catalyzes the transfer of a GlcNAc subunit on undecaprenyl-pyrophosphoryl-MurNAc-pentapeptide (lipid intermediate I) to form undecaprenyl-pyrophosphoryl-MurNAc-(pentapeptide)GlcNAc (lipid intermediate II). The sequence is that of UDP-N-acetylglucosamine--N-acetylmuramyl-(pentapeptide) pyrophosphoryl-undecaprenol N-acetylglucosamine transferase from Shewanella frigidimarina (strain NCIMB 400).